We begin with the raw amino-acid sequence, 482 residues long: Cobyrinate a,c-diamide synthase (482 aa).

The GATase cobBQ-type domain occupies 248–441 (RLAIAQDQAF…LHLHWGSQIS (194 aa)). The active-site Nucleophile is Cys331.

Belongs to the CobB/CbiA family. It depends on Mg(2+) as a cofactor.

It carries out the reaction cob(II)yrinate + 2 L-glutamine + 2 ATP + 2 H2O = cob(II)yrinate a,c diamide + 2 L-glutamate + 2 ADP + 2 phosphate + 2 H(+). It functions in the pathway cofactor biosynthesis; adenosylcobalamin biosynthesis; cob(II)yrinate a,c-diamide from sirohydrochlorin (anaerobic route): step 10/10. Functionally, catalyzes the ATP-dependent amidation of the two carboxylate groups at positions a and c of cobyrinate, using either L-glutamine or ammonia as the nitrogen source. The chain is Cobyrinate a,c-diamide synthase from Synechocystis sp. (strain ATCC 27184 / PCC 6803 / Kazusa).